A 489-amino-acid polypeptide reads, in one-letter code: Aklavinone 12-hydroxylase DnrF (489 aa).

Residues 17–18 (LG), Glu37, Gln121, and Leu145 contribute to the FAD site. Residue Tyr224 is the Proton acceptor of the active site. Position 308 (Asp308) interacts with FAD. Gly317 contributes to the aklavinone binding site. Disordered regions lie at residues 402–428 (VAAE…RAPH) and 455–489 (EGGA…PPAN). The segment covering 468–482 (RIWASASTSISSAAM) has biased composition (low complexity).

It belongs to the PheA/TfdB FAD monooxygenase family. Monomer. It depends on FAD as a cofactor.

The enzyme catalyses aklavinone + NADPH + O2 + H(+) = epsilon-rhodomycinone + NADP(+) + H2O. It participates in antibiotic biosynthesis; daunorubicin biosynthesis. Its pathway is antibiotic biosynthesis; carminomycin biosynthesis. It functions in the pathway antibiotic biosynthesis; rhodomycin biosynthesis. Involved in the biosynthesis of the anthracyclines carminomycin, rhodomycin and daunorubicin (daunomycin) which are aromatic polyketide antibiotics that exhibit high cytotoxicity and are widely applied in the chemotherapy of a variety of cancers. Catalyzes the incorporation of a hydroxyl group at position C-11 of aklavinone, resulting in epsilon-rhodomycinone. It cannot accept substrates glycosylated at position C-7. It can also hydroxylate 11-deoxycarminomycinone and can use both NAD or NADP. The protein is Aklavinone 12-hydroxylase DnrF (dnrF) of Streptomyces peucetius.